The primary structure comprises 275 residues: Putative rhamnulose-1-phosphate aldolase (275 aa).

Residue Glu-117 is part of the active site. Zn(2+) contacts are provided by His-141, His-143, and His-212.

It belongs to the aldolase class II family. RhaD subfamily. As to quaternary structure, homotetramer. Requires Zn(2+) as cofactor.

The protein localises to the cytoplasm. It carries out the reaction L-rhamnulose 1-phosphate = (S)-lactaldehyde + dihydroxyacetone phosphate. The protein operates within carbohydrate degradation; L-rhamnose degradation; glycerone phosphate from L-rhamnose: step 3/3. Its function is as follows. Catalyzes the reversible cleavage of L-rhamnulose-1-phosphate to dihydroxyacetone phosphate (DHAP) and L-lactaldehyde. This chain is Putative rhamnulose-1-phosphate aldolase, found in Salmonella typhi.